We begin with the raw amino-acid sequence, 211 residues long: Arginine exporter protein ArgO (211 aa).

The next 6 membrane-spanning stretches (helical) occupy residues 1-21 (MLSY…PLGP), 37-57 (LMIA…GIFG), 68-88 (LLAL…FGAL), 111-131 (IIAT…DTFV), 147-167 (WFAL…ALLA), and 186-206 (LVGL…IHHI).

The protein belongs to the LysE/ArgO transporter (TC 2.A.75) family.

The protein localises to the cell inner membrane. The catalysed reaction is L-arginine(in) = L-arginine(out). Functionally, involved in the export of arginine. Important to control the intracellular level of arginine and the correct balance between arginine and lysine. In Enterobacter sp. (strain 638), this protein is Arginine exporter protein ArgO.